Here is a 427-residue protein sequence, read N- to C-terminus: Trigger factor (427 aa).

Positions 163–248 constitute a PPIase FKBP-type domain; the sequence is GDTVVIDFVG…IHEVKAKEVP (86 aa).

Belongs to the FKBP-type PPIase family. Tig subfamily.

It is found in the cytoplasm. The catalysed reaction is [protein]-peptidylproline (omega=180) = [protein]-peptidylproline (omega=0). In terms of biological role, involved in protein export. Acts as a chaperone by maintaining the newly synthesized protein in an open conformation. Functions as a peptidyl-prolyl cis-trans isomerase. The sequence is that of Trigger factor from Streptococcus pneumoniae (strain CGSP14).